Reading from the N-terminus, the 697-residue chain is Sodium-dependent phosphate transport protein 2B (697 aa).

The disordered stretch occupies residues 1-45 (MAPWPELENAQPNPGKFIEGASGPQSSIPAKDKEASKTNDNGTPV). Topologically, residues 1 to 91 (MAPWPELENA…WSERDTKGKT (91 aa)) are cytoplasmic. A helical membrane pass occupies residues 92 to 112 (LCIFQGVGKFILLLGFLYLFV). Residues 113–136 (CSLDVLSSAFQLVGGKVAGQFFSN) lie on the Extracellular side of the membrane. The chain crosses the membrane as a helical span at residues 137–157 (NSIMSNPVAGLVIGVLVTVMV). Residues 158 to 213 (QSSSTSSSIIVSMVASSLLTVRAAIPIIMGANIGTSITNTIVALMQAGDRNEFRRA) are Cytoplasmic-facing. The chain crosses the membrane as a helical span at residues 214-234 (FAGATVHDFFNWLSVFVLLPL). The Extracellular portion of the chain corresponds to 235 to 363 (EAATHYLEIL…FVNFSLPDLA (129 aa)). 4 N-linked (GlcNAc...) asparagine glycosylation sites follow: asparagine 295, asparagine 308, asparagine 321, and asparagine 356. Residues cysteine 303 and cysteine 350 are joined by a disulfide bond. The chain crosses the membrane as a helical span at residues 364–384 (VGIILLTVSLVVLCGCLIMIV). Residues 385-408 (KLLGSVLRGQVATVIKKTLNTDFP) lie on the Cytoplasmic side of the membrane. Residues 409 to 429 (FPFAWLTGYLAILVGAGMTFI) form a helical membrane-spanning segment. Topologically, residues 430-486 (VQSSSVFTSAMTPLIGIGVISIERAYPLTLGSNIGTTTTAILAALASPGNTLRSSLQ) are extracellular. A helical transmembrane segment spans residues 487 to 507 (IALCHFFFNISGILLWYPIPF). The Cytoplasmic segment spans residues 508 to 526 (TRLPIRLAKGLGNISAKYR). The chain crosses the membrane as a helical span at residues 527–547 (WFAVFYLIFFFFVTPLTVFGL). Over 548–551 (SLAG) the chain is Extracellular. Residues 552-572 (WPVLVGVGVPIILLLLLVLCL) form a helical membrane-spanning segment. Residues 573–696 (RMLQFRCPRI…SMKALSNTTV (124 aa)) lie on the Cytoplasmic side of the membrane.

Belongs to the SLC34A transporter family. As to expression, highly abundant in the ileum of small intestine, whereas it is almost absent in the duodenum and in the jejunum.

It localises to the apical cell membrane. It carries out the reaction 3 Na(+)(out) + phosphate(out) = 3 Na(+)(in) + phosphate(in). Functionally, involved in actively transporting phosphate into cells via Na(+) cotransport. The chain is Sodium-dependent phosphate transport protein 2B (Slc34a2) from Mus musculus (Mouse).